Consider the following 179-residue polypeptide: ATP synthase subunit delta (179 aa).

Belongs to the ATPase delta chain family. F-type ATPases have 2 components, F(1) - the catalytic core - and F(0) - the membrane proton channel. F(1) has five subunits: alpha(3), beta(3), gamma(1), delta(1), epsilon(1). F(0) has three main subunits: a(1), b(2) and c(10-14). The alpha and beta chains form an alternating ring which encloses part of the gamma chain. F(1) is attached to F(0) by a central stalk formed by the gamma and epsilon chains, while a peripheral stalk is formed by the delta and b chains.

It localises to the cell membrane. F(1)F(0) ATP synthase produces ATP from ADP in the presence of a proton or sodium gradient. F-type ATPases consist of two structural domains, F(1) containing the extramembraneous catalytic core and F(0) containing the membrane proton channel, linked together by a central stalk and a peripheral stalk. During catalysis, ATP synthesis in the catalytic domain of F(1) is coupled via a rotary mechanism of the central stalk subunits to proton translocation. Its function is as follows. This protein is part of the stalk that links CF(0) to CF(1). It either transmits conformational changes from CF(0) to CF(1) or is implicated in proton conduction. The protein is ATP synthase subunit delta of Rubrobacter xylanophilus (strain DSM 9941 / JCM 11954 / NBRC 16129 / PRD-1).